A 132-amino-acid chain; its full sequence is Translation initiation factor 5A (132 aa).

A Hypusine modification is found at Lys36.

This sequence belongs to the eIF-5A family.

It localises to the cytoplasm. Its function is as follows. Functions by promoting the formation of the first peptide bond. The polypeptide is Translation initiation factor 5A (eIF5A) (Thermofilum pendens (strain DSM 2475 / Hrk 5)).